Here is a 203-residue protein sequence, read N- to C-terminus: Endo-type membrane-bound lytic murein transglycosylase A (203 aa).

Positions 1–15 (MKLRWFAFLIVLLAG) are cleaved as a signal peptide. Cys-16 carries N-palmitoyl cysteine lipidation. Cys-16 carries the S-diacylglycerol cysteine lipid modification.

It belongs to the transglycosylase Slt family.

The protein localises to the cell outer membrane. It catalyses the reaction Endolytic cleavage of the (1-&gt;4)-beta-glycosidic linkage between N-acetylmuramic acid (MurNAc) and N-acetylglucosamine (GlcNAc) residues in peptidoglycan with concomitant formation of a 1,6-anhydrobond in the MurNAc residue.. Functionally, murein-degrading enzyme. May play a role in recycling of muropeptides during cell elongation and/or cell division. Preferentially cleaves at a distance of more than two disaccharide units from the ends of the glycan chain. This chain is Endo-type membrane-bound lytic murein transglycosylase A, found in Shigella dysenteriae serotype 1 (strain Sd197).